Consider the following 276-residue polypeptide: NH(3)-dependent NAD(+) synthetase (276 aa).

43 to 50 (GISGGVDS) serves as a coordination point for ATP. Residue Asp-49 coordinates Mg(2+). Deamido-NAD(+) is bound at residue Arg-146. Residue Thr-166 coordinates ATP. Glu-171 is a binding site for Mg(2+). Deamido-NAD(+)-binding residues include Lys-179 and Asp-186. Residues Lys-195 and Thr-217 each coordinate ATP. A deamido-NAD(+)-binding site is contributed by 266-267 (HK).

The protein belongs to the NAD synthetase family. As to quaternary structure, homodimer.

It catalyses the reaction deamido-NAD(+) + NH4(+) + ATP = AMP + diphosphate + NAD(+) + H(+). It functions in the pathway cofactor biosynthesis; NAD(+) biosynthesis; NAD(+) from deamido-NAD(+) (ammonia route): step 1/1. In terms of biological role, catalyzes the ATP-dependent amidation of deamido-NAD to form NAD. Uses ammonia as a nitrogen source. The protein is NH(3)-dependent NAD(+) synthetase of Vibrio cholerae serotype O1 (strain ATCC 39541 / Classical Ogawa 395 / O395).